Reading from the N-terminus, the 452-residue chain is UDP-N-acetylmuramoyl-tripeptide--D-alanyl-D-alanine ligase (452 aa).

An ATP-binding site is contributed by 113–119; it reads GSNGKTT.

This sequence belongs to the MurCDEF family. MurF subfamily.

Its subcellular location is the cytoplasm. The catalysed reaction is UDP-N-acetyl-alpha-D-muramoyl-L-alanyl-gamma-D-glutamyl-L-lysine + D-alanyl-D-alanine + ATP = UDP-N-acetyl-alpha-D-muramoyl-L-alanyl-gamma-D-glutamyl-L-lysyl-D-alanyl-D-alanine + ADP + phosphate + H(+). It functions in the pathway cell wall biogenesis; peptidoglycan biosynthesis. Its function is as follows. Involved in cell wall formation. Catalyzes the final step in the synthesis of UDP-N-acetylmuramoyl-pentapeptide, the precursor of murein. Catalyzes the addition of D-alanyl-D-alanine to UDP-MurNAc-L-alanyl-gamma-D-glutamyl-L-lysine. In vitro, can also use the mesodiaminopimelic acid-containing form of UDP-MurNAc-tripeptide, with the same efficiency, revealing that the discrimination for the amino acid residue at the third position of the peptide in the peptidoglycans is entirely supported by MurE. In Staphylococcus aureus (strain NCTC 8325 / PS 47), this protein is UDP-N-acetylmuramoyl-tripeptide--D-alanyl-D-alanine ligase.